Reading from the N-terminus, the 728-residue chain is 1,4-alpha-glucan branching enzyme GlgB (728 aa).

Residue Asp405 is the Nucleophile of the active site. The active-site Proton donor is Glu458.

It belongs to the glycosyl hydrolase 13 family. GlgB subfamily. Monomer.

The catalysed reaction is Transfers a segment of a (1-&gt;4)-alpha-D-glucan chain to a primary hydroxy group in a similar glucan chain.. It functions in the pathway glycan biosynthesis; glycogen biosynthesis. Catalyzes the formation of the alpha-1,6-glucosidic linkages in glycogen by scission of a 1,4-alpha-linked oligosaccharide from growing alpha-1,4-glucan chains and the subsequent attachment of the oligosaccharide to the alpha-1,6 position. This is 1,4-alpha-glucan branching enzyme GlgB from Citrobacter koseri (strain ATCC BAA-895 / CDC 4225-83 / SGSC4696).